The chain runs to 224 residues: MAQKEEAAEAAAPASQNGDDLENLEDPEKLKELIDLPPFEIVTGVRLPVNFFKFQFRNVEYSSGRNKTFLCYVVEVQSKGGQAQATQGYLEDEHAGAHAEEAFFNTILPAFDPALKYNVTWYVSSSPCAACADRILKTLSKTKNLRLLILVSRLFMWEEPEVQAALKKLKEAGCKLRIMKPQDFEYIWQNFVEQEEGESKAFEPWEDIQENFLYYEEKLADILK.

A disordered region spans residues 1-23 (MAQKEEAAEAAAPASQNGDDLEN). Zn(2+) contacts are provided by Glu-60 and His-98. The CMP/dCMP-type deaminase domain maps to 64 to 169 (GRNKTFLCYV…PEVQAALKKL (106 aa)). Glu-100 (proton donor) is an active-site residue. Residues Cys-128 and Cys-131 each coordinate Zn(2+).

Belongs to the cytidine and deoxycytidylate deaminase family. In terms of assembly, homotetramer. Requires Zn(2+) as cofactor. In terms of tissue distribution, expressed exclusively in heart and skeletal muscle.

It catalyses the reaction cytidine(6666) in apoB mRNA + H2O + H(+) = uridine(6666) in apoB mRNA + NH4(+). Its function is as follows. Probable C to U editing enzyme whose physiological substrate is not yet known. Does not display detectable apoB mRNA editing. Has a low intrinsic cytidine deaminase activity. May play a role in the epigenetic regulation of gene expression through the process of active DNA demethylation. This Mus musculus (Mouse) protein is C-&gt;U-editing enzyme APOBEC-2 (Apobec2).